Here is a 150-residue protein sequence, read N- to C-terminus: MARQFVVLVLLTLTIATAFAADAPSASPKKSPSPTAAPTKAPTATTKAPSAPTKAPAAAPKSSSASSPKASSPAAEGPVPEDDYSASSPSDSAEAPTVSSPPAPTPDSTSAADGPSDGPTAESPKSGAVTTAKFSVVGTVATVGFFFFSF.

An N-terminal signal peptide occupies residues 1-20 (MARQFVVLVLLTLTIATAFA). Composition is skewed to low complexity over residues 19 to 75 (FAAD…SPAA) and 85 to 98 (SASS…APTV). Positions 19–131 (FAADAPSASP…ESPKSGAVTT (113 aa)) are disordered. S126 is lipidated: GPI-anchor amidated serine. A propeptide spans 127-150 (GAVTTAKFSVVGTVATVGFFFFSF) (removed in mature form).

The protein belongs to the classical AGP family. O-glycosylated on the hydroxyproline residues. In terms of tissue distribution, expressed in the anthers.

The protein localises to the cell membrane. Its function is as follows. Proteoglycan that seems to be implicated in diverse developmental roles such as differentiation, cell-cell recognition, embryogenesis and programmed cell death. Plays an important role during the formation of the nexine layer of the pollen wall. This Arabidopsis thaliana (Mouse-ear cress) protein is Classical arabinogalactan protein 6 (AGP6).